The following is a 121-amino-acid chain: Protein CHLORORESPIRATORY REDUCTION 42, chloroplastic (121 aa).

As to quaternary structure, biogenesis factor component of the plastidial NDH subcomplex A.

It is found in the plastid. The protein resides in the chloroplast. The protein localises to the chloroplast stroma. Required for both formation and activity of the chloroplast NAD(P)H dehydrogenase (NDH) complex of the photosynthetic electron transport chain. Functions in assembly or stabilization of the NDH complex; probably involved, together with CRR1 and CRR6, in the incorporation of NdhJ, NdhM, NdhK and NdhI into the NDH subcomplex A assembly intermediate (NAI500) to produce the complex NAI400. The sequence is that of Protein CHLORORESPIRATORY REDUCTION 42, chloroplastic from Arabidopsis thaliana (Mouse-ear cress).